We begin with the raw amino-acid sequence, 500 residues long: UPF0371 protein SZO_06760 (500 aa).

Belongs to the UPF0371 family.

The sequence is that of UPF0371 protein SZO_06760 from Streptococcus equi subsp. zooepidemicus (strain H70).